Reading from the N-terminus, the 814-residue chain is Lon protease 1 (814 aa).

Residues 1 to 17 (MTDDRDKTNEDPEKIIE) show a composition bias toward basic and acidic residues. The interval 1–28 (MTDDRDKTNEDPEKIIEADFNPEDPDDA) is disordered. Residues 49–245 (LPIIPLRPRP…KVLVLLKKEL (197 aa)) form the Lon N-terminal domain. Position 398–405 (398–405 (GPPGVGKT)) interacts with ATP. One can recognise a Lon proteolytic domain in the interval 633-814 (EDVPGVVTGL…YRDVYQVAFG (182 aa)). Active-site residues include serine 721 and lysine 764.

This sequence belongs to the peptidase S16 family. In terms of assembly, homohexamer. Organized in a ring with a central cavity.

Its subcellular location is the cytoplasm. The catalysed reaction is Hydrolysis of proteins in presence of ATP.. Its function is as follows. ATP-dependent serine protease that mediates the selective degradation of mutant and abnormal proteins as well as certain short-lived regulatory proteins. Required for cellular homeostasis and for survival from DNA damage and developmental changes induced by stress. Degrades polypeptides processively to yield small peptide fragments that are 5 to 10 amino acids long. Binds to DNA in a double-stranded, site-specific manner. The chain is Lon protease 1 from Syntrophotalea carbinolica (strain DSM 2380 / NBRC 103641 / GraBd1) (Pelobacter carbinolicus).